We begin with the raw amino-acid sequence, 410 residues long: 2-oxoglutarate-dependent dioxygenase AOP3 (410 aa).

Positions 258 to 355 (GNASVGAKEA…RYAAALFSYP (98 aa)) constitute a Fe2OG dioxygenase domain. Residues His278, Asp280, and His335 each contribute to the Fe cation site. Arg346 provides a ligand contact to 2-oxoglutarate.

Belongs to the iron/ascorbate-dependent oxidoreductase family. Fe(2+) serves as cofactor.

Functionally, 2-oxoglutarate-dependent dioxygenase involved in glucosinolates biosynthesis. Catalyzes the conversion of methylsulfinylalkyl glucosinolates to hydroxyalkyl glucosinolates. This chain is 2-oxoglutarate-dependent dioxygenase AOP3 (AOP3), found in Arabidopsis thaliana (Mouse-ear cress).